We begin with the raw amino-acid sequence, 611 residues long: Adenosylhomocysteinase 3 (611 aa).

Low complexity-rich tracts occupy residues 1-14, 36-57, and 68-81; these read MSVQVVSAAAAAKV, AAVGAMAPPAGGGDPEAPAPAA, and GPAAALSPAAGKVP. Residues 1–184 are disordered; it reads MSVQVVSAAA…KQQKNSKGSS (184 aa). S2 carries the post-translational modification N-acetylserine. The segment at 2–109 is LISN domain, inhibits interaction with ITPR1; sequence SVQVVSAAAA…DGGEALVSPD (108 aa). S107 is subject to Phosphoserine. Over residues 135–144 the composition is skewed to basic residues; the sequence is RPTKIGRRSL. A compositionally biased stretch (low complexity) spans 145–164; it reads SRSISQSSTDSYSSAASYTD. 4 positions are modified to phosphoserine: S149, S152, S155, and S158. T236, D310, and E335 together coordinate substrate. Position 336–338 (336–338) interacts with NAD(+); the sequence is SVT. 2 residues coordinate substrate: K365 and D369. NAD(+) is bound by residues N370, 401–406, E422, N457, 478–479, and N525; these read GEVGKG and MG.

The protein belongs to the adenosylhomocysteinase family. Homotetramer. Forms heteromultimers with AHCYL1 (via the C-terminal region). Interacts with ITPR1; with lower affinity than AHCYL1 and maybe via ITPR1. Interacts with SLC4A4. Interacts with ZCCHC4. It depends on NAD(+) as a cofactor. Post-translationally, phosphorylated during neuronal differentiation at the LISN domain.

The protein resides in the cytoplasm. Its subcellular location is the microsome. It catalyses the reaction S-adenosyl-L-homocysteine + H2O = L-homocysteine + adenosine. The protein operates within amino-acid biosynthesis; L-homocysteine biosynthesis; L-homocysteine from S-adenosyl-L-homocysteine: step 1/1. Its function is as follows. May regulate the electrogenic sodium/bicarbonate cotransporter SLC4A4 activity and Mg(2+)-sensitivity. On the contrary of its homolog AHCYL1, does not regulate ITPR1 sensitivity to inositol 1,4,5-trisphosphate. The protein is Adenosylhomocysteinase 3 (AHCYL2) of Homo sapiens (Human).